The sequence spans 408 residues: Argininosuccinate synthase (408 aa).

Residues 10-18 (AYSGGLDTS) and alanine 37 contribute to the ATP site. Residues tyrosine 90 and serine 95 each contribute to the L-citrulline site. Residue glycine 120 coordinates ATP. Residues threonine 122, asparagine 126, and aspartate 127 each coordinate L-aspartate. Asparagine 126 contributes to the L-citrulline binding site. L-citrulline contacts are provided by arginine 130, serine 181, serine 190, glutamate 266, and tyrosine 278.

It belongs to the argininosuccinate synthase family. Type 1 subfamily. As to quaternary structure, homotetramer.

Its subcellular location is the cytoplasm. It catalyses the reaction L-citrulline + L-aspartate + ATP = 2-(N(omega)-L-arginino)succinate + AMP + diphosphate + H(+). Its pathway is amino-acid biosynthesis; L-arginine biosynthesis; L-arginine from L-ornithine and carbamoyl phosphate: step 2/3. The sequence is that of Argininosuccinate synthase from Chromobacterium violaceum (strain ATCC 12472 / DSM 30191 / JCM 1249 / CCUG 213 / NBRC 12614 / NCIMB 9131 / NCTC 9757 / MK).